We begin with the raw amino-acid sequence, 57 residues long: uncharacterized protein (57 aa).

This is an uncharacterized protein from Ureaplasma parvum serovar 3 (strain ATCC 700970).